The chain runs to 351 residues: N-acetyl-gamma-glutamyl-phosphate reductase (351 aa).

The active site involves Cys154.

This sequence belongs to the NAGSA dehydrogenase family. Type 1 subfamily.

Its subcellular location is the cytoplasm. It carries out the reaction N-acetyl-L-glutamate 5-semialdehyde + phosphate + NADP(+) = N-acetyl-L-glutamyl 5-phosphate + NADPH + H(+). It functions in the pathway amino-acid biosynthesis; L-arginine biosynthesis; N(2)-acetyl-L-ornithine from L-glutamate: step 3/4. Its function is as follows. Catalyzes the NADPH-dependent reduction of N-acetyl-5-glutamyl phosphate to yield N-acetyl-L-glutamate 5-semialdehyde. This chain is N-acetyl-gamma-glutamyl-phosphate reductase, found in Prochlorococcus marinus (strain MIT 9312).